We begin with the raw amino-acid sequence, 177 residues long: Large ribosomal subunit protein uL6 (177 aa).

The protein belongs to the universal ribosomal protein uL6 family. As to quaternary structure, part of the 50S ribosomal subunit.

This protein binds to the 23S rRNA, and is important in its secondary structure. It is located near the subunit interface in the base of the L7/L12 stalk, and near the tRNA binding site of the peptidyltransferase center. This Rhodopseudomonas palustris (strain HaA2) protein is Large ribosomal subunit protein uL6.